The following is a 293-amino-acid chain: Glycine--tRNA ligase alpha subunit (293 aa).

It belongs to the class-II aminoacyl-tRNA synthetase family. Tetramer of two alpha and two beta subunits.

It is found in the cytoplasm. The catalysed reaction is tRNA(Gly) + glycine + ATP = glycyl-tRNA(Gly) + AMP + diphosphate. The polypeptide is Glycine--tRNA ligase alpha subunit (Picosynechococcus sp. (strain ATCC 27264 / PCC 7002 / PR-6) (Agmenellum quadruplicatum)).